The primary structure comprises 420 residues: Exodeoxyribonuclease 7 large subunit (420 aa).

This sequence belongs to the XseA family. As to quaternary structure, heterooligomer composed of large and small subunits.

It is found in the cytoplasm. The enzyme catalyses Exonucleolytic cleavage in either 5'- to 3'- or 3'- to 5'-direction to yield nucleoside 5'-phosphates.. In terms of biological role, bidirectionally degrades single-stranded DNA into large acid-insoluble oligonucleotides, which are then degraded further into small acid-soluble oligonucleotides. This Helicobacter pylori (strain J99 / ATCC 700824) (Campylobacter pylori J99) protein is Exodeoxyribonuclease 7 large subunit.